Reading from the N-terminus, the 574-residue chain is Membralin (574 aa).

The disordered stretch occupies residues 1–27; the sequence is MSEHAAAPGPGPNGGGGGGAAPVRGPR. Residue serine 2 is modified to N-acetylserine. Residues 69 to 89 form a helical membrane-spanning segment; that stretch reads FFVLLKALFVLFVLAYIHIVF. Asparagine 180 carries an N-linked (GlcNAc...) asparagine glycan. A run of 3 helical transmembrane segments spans residues 293-313, 337-357, and 417-437; these read TSYL…SMLL, IAFP…MEAI, and YSSL…IYFF. Composition is skewed to low complexity over residues 461 to 470 and 491 to 501; these read LGPGTPTALP and LGPSSSPAPTG. Disordered stretches follow at residues 461-515 and 546-574; these read LGPG…GASV and RRPT…PAGS.

It belongs to the membralin family. As to quaternary structure, interacts with ERLIN2. Detected in brain, spinal cord, lung, liver and kidney.

The protein resides in the endoplasmic reticulum membrane. Its function is as follows. May have a role in the ERAD pathway required for clearance of misfolded proteins in the endoplasmic reticulum (ER). Promotes survival of motor neurons, probably by protecting against ER stress. The chain is Membralin (Tmem259) from Mus musculus (Mouse).